The sequence spans 264 residues: ELL-associated factor 2 (264 aa).

Disordered regions lie at residues 114 to 154 (EGSS…PSSP) and 169 to 264 (MDQL…DSDD). Residues 117–142 (SKVQSRIEQQQQQIRNSSKTPNNIKN) show a composition bias toward polar residues. Residues 173-196 (SSSDSSSDSKSSSSSSSSSENSSS) show a composition bias toward low complexity. Basic and acidic residues predominate over residues 228-238 (VPDKDASHNRS). Residues 239-264 (QENSGHMMNTLRSDLQLSESGSDSDD) show a composition bias toward polar residues.

This sequence belongs to the EAF family.

The protein resides in the nucleus speckle. Functionally, may act as a transcriptional transactivator. This chain is ELL-associated factor 2 (EAF2), found in Gallus gallus (Chicken).